A 181-amino-acid chain; its full sequence is Probable cobalt-precorrin-6B C(15)-methyltransferase (decarboxylating) (181 aa).

S-adenosyl-L-methionine is bound by residues Thr16, 40–44 (GCGSG), Asp61, and Ala89.

The protein belongs to the methyltransferase superfamily. Archaeal-type CbiT family.

The enzyme catalyses Co-precorrin-6B + S-adenosyl-L-methionine = Co-precorrin-7 + S-adenosyl-L-homocysteine + CO2. Its pathway is cofactor biosynthesis; adenosylcobalamin biosynthesis; cob(II)yrinate a,c-diamide from sirohydrochlorin (anaerobic route): step 8/10. Functionally, catalyzes the methylation of C-15 in cobalt-precorrin-6B followed by the decarboxylation of C-12 to form cobalt-precorrin-7. This Methanococcus maripaludis (strain DSM 14266 / JCM 13030 / NBRC 101832 / S2 / LL) protein is Probable cobalt-precorrin-6B C(15)-methyltransferase (decarboxylating).